The sequence spans 360 residues: Probable mannan endo-1,4-beta-mannosidase A (360 aa).

An N-terminal signal peptide occupies residues 1–18; that stretch reads MKLSQILTFASLLSGALA. The substrate site is built by Asn-142 and Asn-178. Glu-179 (proton donor) is an active-site residue. Tyr-254 is a substrate binding site. The Nucleophile role is filled by Glu-287. An N-linked (GlcNAc...) asparagine glycan is attached at Asn-307. A substrate-binding site is contributed by Trp-317.

Belongs to the glycosyl hydrolase 5 (cellulase A) family.

Its subcellular location is the secreted. The catalysed reaction is Random hydrolysis of (1-&gt;4)-beta-D-mannosidic linkages in mannans, galactomannans and glucomannans.. In terms of biological role, endo-1,4-mannanase, a crucial enzyme for depolymerization of seed galactomannans and wood galactoglucomannans. The chain is Probable mannan endo-1,4-beta-mannosidase A (manA) from Aspergillus clavatus (strain ATCC 1007 / CBS 513.65 / DSM 816 / NCTC 3887 / NRRL 1 / QM 1276 / 107).